The primary structure comprises 183 residues: Gamma-crystallin N (183 aa).

Beta/gamma crystallin 'Greek key' domains follow at residues 6-46, 47-89, 95-136, and 138-180; these read GKII…RVET, GAWI…KPVR, YRLE…KVYG, and GAWV…RRVV.

The protein belongs to the beta/gamma-crystallin family. As to quaternary structure, monomer.

In terms of biological role, crystallins are the dominant structural components of the vertebrate eye lens. This Xenopus tropicalis (Western clawed frog) protein is Gamma-crystallin N (crygn).